The sequence spans 75 residues: Guanine nucleotide-binding protein G(I)/G(S)/G(O) subunit gamma-4 (75 aa).

Cys72 is subject to Cysteine methyl ester. The S-geranylgeranyl cysteine moiety is linked to residue Cys72. Residues 73 to 75 (TIL) constitute a propeptide, removed in mature form.

This sequence belongs to the G protein gamma family. In terms of assembly, g proteins are composed of 3 units, alpha, beta and gamma. Interacts with beta-1 and beta-2, but not with beta-3. Interacts with KCNK1. Interacts (via C-terminus) with KCNK2/TREK-1 (via N-terminus); this interaction confers ion selectivity to Cl(-) and L-glutamate. Brain, kidney, pancreas, skeletal muscle and faintly in cardiac muscle.

The protein localises to the cell membrane. In terms of biological role, guanine nucleotide-binding proteins (G proteins) are involved as a modulator or transducer in various transmembrane signaling systems. The beta and gamma chains are required for the GTPase activity, for replacement of GDP by GTP, and for G protein-effector interaction. The chain is Guanine nucleotide-binding protein G(I)/G(S)/G(O) subunit gamma-4 (GNG4) from Homo sapiens (Human).